The following is a 150-amino-acid chain: Large ribosomal subunit protein bL9 (150 aa).

Belongs to the bacterial ribosomal protein bL9 family.

Binds to the 23S rRNA. This chain is Large ribosomal subunit protein bL9, found in Shewanella oneidensis (strain ATCC 700550 / JCM 31522 / CIP 106686 / LMG 19005 / NCIMB 14063 / MR-1).